The sequence spans 1370 residues: DNA-directed RNA polymerase subunit beta (1370 aa).

The protein belongs to the RNA polymerase beta chain family. In terms of assembly, the RNAP catalytic core consists of 2 alpha, 1 beta, 1 beta' and 1 omega subunit. When a sigma factor is associated with the core the holoenzyme is formed, which can initiate transcription.

The enzyme catalyses RNA(n) + a ribonucleoside 5'-triphosphate = RNA(n+1) + diphosphate. DNA-dependent RNA polymerase catalyzes the transcription of DNA into RNA using the four ribonucleoside triphosphates as substrates. The sequence is that of DNA-directed RNA polymerase subunit beta from Geotalea daltonii (strain DSM 22248 / JCM 15807 / FRC-32) (Geobacter daltonii).